Reading from the N-terminus, the 164-residue chain is Cyclic pyranopterin monophosphate synthase (164 aa).

Residues 73–75 (LCH) and 111–112 (ME) each bind substrate. The active site involves Asp-126.

Belongs to the MoaC family. As to quaternary structure, homohexamer; trimer of dimers.

It catalyses the reaction (8S)-3',8-cyclo-7,8-dihydroguanosine 5'-triphosphate = cyclic pyranopterin phosphate + diphosphate. It participates in cofactor biosynthesis; molybdopterin biosynthesis. In terms of biological role, catalyzes the conversion of (8S)-3',8-cyclo-7,8-dihydroguanosine 5'-triphosphate to cyclic pyranopterin monophosphate (cPMP). In Herpetosiphon aurantiacus (strain ATCC 23779 / DSM 785 / 114-95), this protein is Cyclic pyranopterin monophosphate synthase.